The sequence spans 186 residues: Threonylcarbamoyl-AMP synthase (186 aa).

The region spanning 1–186 is the YrdC-like domain; sequence MADTWEAAHS…LNNQVFRDDA (186 aa).

Belongs to the SUA5 family. TsaC subfamily.

It is found in the cytoplasm. It carries out the reaction L-threonine + hydrogencarbonate + ATP = L-threonylcarbamoyladenylate + diphosphate + H2O. Functionally, required for the formation of a threonylcarbamoyl group on adenosine at position 37 (t(6)A37) in tRNAs that read codons beginning with adenine. Catalyzes the conversion of L-threonine, HCO(3)(-)/CO(2) and ATP to give threonylcarbamoyl-AMP (TC-AMP) as the acyladenylate intermediate, with the release of diphosphate. The sequence is that of Threonylcarbamoyl-AMP synthase from Idiomarina loihiensis (strain ATCC BAA-735 / DSM 15497 / L2-TR).